A 173-amino-acid chain; its full sequence is MDITIQHPWFKRALGPLIPSRLFDQFFGEGLLEYDLLPLFSSTISPYYRQSLFRSVLESGISEVRSDRDKFTIMLDVKHFSPEDLSVKIIDDFVEIHGKHSERQDDHGYISREFHRRYRLPANVDQSAITCSLSSDGMLTFSGPKVPSNMDPSHSERPIPVSREEKPTSAPSS.

N-acetylmethionine is present on Met-1. The sHSP domain occupies 52-162 (LFRSVLESGI…SHSERPIPVS (111 aa)). Zn(2+) contacts are provided by His-100, Glu-102, His-107, and His-154. Residues 142-173 (SGPKVPSNMDPSHSERPIPVSREEKPTSAPSS) are disordered. Positions 153–167 (SHSERPIPVSREEKP) are enriched in basic and acidic residues. Ser-162 carries an O-linked (GlcNAc) serine glycan.

Belongs to the small heat shock protein (HSP20) family. As to quaternary structure, heteropolymer composed of three CRYAA and one CRYAB subunits. Inter-subunit bridging via zinc ions enhances stability, which is crucial as there is no protein turn over in the lens. Can also form homodimers and homotetramers (dimers of dimers) which serve as the building blocks of homooligomers. Within homooligomers, the zinc-binding motif is created from residues of 3 different molecules. His-100 and Glu-102 from one molecule are ligands of the zinc ion, and His-107 and His-154 residues from additional molecules complete the site with tetrahedral coordination geometry.

The protein resides in the cytoplasm. Its subcellular location is the nucleus. Contributes to the transparency and refractive index of the lens. May act as a chaperone, preventing aggregation of various proteins under a wide range of stress conditions. The sequence is that of Alpha-crystallin A chain (CRYAA) from Gallus gallus (Chicken).